A 110-amino-acid polypeptide reads, in one-letter code: Flagellar hook-basal body complex protein FliE (110 aa).

Belongs to the FliE family.

The protein resides in the bacterial flagellum basal body. The sequence is that of Flagellar hook-basal body complex protein FliE from Pseudomonas putida (strain GB-1).